Reading from the N-terminus, the 103-residue chain is Large ribosomal subunit protein bL21 (103 aa).

It belongs to the bacterial ribosomal protein bL21 family. Part of the 50S ribosomal subunit. Contacts protein L20.

Its function is as follows. This protein binds to 23S rRNA in the presence of protein L20. This Paraburkholderia phytofirmans (strain DSM 17436 / LMG 22146 / PsJN) (Burkholderia phytofirmans) protein is Large ribosomal subunit protein bL21.